Reading from the N-terminus, the 275-residue chain is Dermonecrotic toxin SpaSicTox-betaIIA3 (275 aa).

Residue H5 is part of the active site. Positions 25 and 27 each coordinate Mg(2+). Catalysis depends on H41, which acts as the Nucleophile. 2 disulfide bridges follow: C45–C51 and C47–C190. A Mg(2+)-binding site is contributed by D85.

This sequence belongs to the arthropod phospholipase D family. Class II subfamily. Requires Mg(2+) as cofactor. In terms of tissue distribution, expressed by the venom gland.

Its subcellular location is the secreted. It carries out the reaction an N-(acyl)-sphingosylphosphocholine = an N-(acyl)-sphingosyl-1,3-cyclic phosphate + choline. It catalyses the reaction an N-(acyl)-sphingosylphosphoethanolamine = an N-(acyl)-sphingosyl-1,3-cyclic phosphate + ethanolamine. The catalysed reaction is a 1-acyl-sn-glycero-3-phosphocholine = a 1-acyl-sn-glycero-2,3-cyclic phosphate + choline. The enzyme catalyses a 1-acyl-sn-glycero-3-phosphoethanolamine = a 1-acyl-sn-glycero-2,3-cyclic phosphate + ethanolamine. Its function is as follows. Dermonecrotic toxins cleave the phosphodiester linkage between the phosphate and headgroup of certain phospholipids (sphingolipid and lysolipid substrates), forming an alcohol (often choline) and a cyclic phosphate. This toxin acts on sphingomyelin (SM). It may also act on ceramide phosphoethanolamine (CPE), lysophosphatidylcholine (LPC) and lysophosphatidylethanolamine (LPE), but not on lysophosphatidylserine (LPS), and lysophosphatidylglycerol (LPG). It acts by transphosphatidylation, releasing exclusively cyclic phosphate products as second products. Induces dermonecrosis, hemolysis, increased vascular permeability, edema, inflammatory response, and platelet aggregation. This Sicarius patagonicus (Six-eyed sand spider) protein is Dermonecrotic toxin SpaSicTox-betaIIA3.